Here is a 491-residue protein sequence, read N- to C-terminus: PE-PGRS family protein PE_PGRS26 (491 aa).

The 93-residue stretch at M1 to A93 folds into the PE domain. Composition is skewed to gly residues over residues N207–L221 and G229–G238. 3 disordered regions span residues N207–G238, D255–G275, and A444–G491. Residues A444–G485 are compositionally biased toward gly residues.

Belongs to the mycobacterial PE family. PGRS subfamily.

The protein localises to the cell surface. The chain is PE-PGRS family protein PE_PGRS26 from Mycobacterium tuberculosis (strain ATCC 25618 / H37Rv).